The primary structure comprises 461 residues: Juvenile hormone epoxide hydrolase (461 aa).

A helical transmembrane segment spans residues 4–24 (LLFIALPLLVLASIPLYLLVL). Residue aspartate 227 is the Nucleophile of the active site. The Proton donor role is filled by tyrosine 373. Residue histidine 430 is the Proton acceptor of the active site.

This sequence belongs to the peptidase S33 family. Homodimer. As to expression, expressed in fat body, foregut and midgut but not in brain, subesophageal ganglia or silk gland of larvae on day 1 of fifth instar.

It localises to the microsome membrane. The protein resides in the endoplasmic reticulum membrane. It catalyses the reaction cis-stilbene oxide + H2O = (1R,2R)-hydrobenzoin. It carries out the reaction 1-(4-methoxyphenyl)-N-methyl-N-[(3-methyloxetan-3-yl)methyl]methanamine + H2O = 2-{[(4-methoxybenzyl)(methyl)amino]methyl}-2-methylpropane-1,3-diol. Functionally, catalyzes juvenile hormone hydrolysis. Degrades juvenile hormone III (JH III) about 3 times and 5 times slower than juvenile hormone I (JH I) and II (JH II), respectively. Degrades cis-stilbene oxide and trans-stilbene oxide about 18 and 43 times slower than JH III, respectively. The protein is Juvenile hormone epoxide hydrolase of Bombyx mori (Silk moth).